A 38-amino-acid chain; its full sequence is Lebetin-2-alpha (38 aa).

Residues 1 to 38 (GDNKPPKKGPPNGCFGHKIDRIGSHSGLGCNKVDDNKG) form a disordered region. Cys14 and Cys30 are oxidised to a cystine.

The protein belongs to the natriuretic peptide family. As to expression, expressed by the venom gland.

Its subcellular location is the secreted. Functionally, inhibits platelet aggregation induced by thrombin, collagen and PAF-acether. Human platelet aggregation induced by thrombin is inhibited by synthetic lebetin-1-alpha with (IC(50)=140 nM). In vivo, inhibits collagen-induced thrombocytopenia in rats. Is not toxic upon intravenous injection into mice and rats. Inhibits platelet aggregation induced by thrombin, collagen and PAF-acether. Human platelet aggregation induced by thrombin is inhibited by synthetic lebetin-1-beta with (IC(50)=32 nM). In vivo, inhibits collagen-induced thrombocytopenia in rats. Is not toxic upon intravenous injection into mice and rats. Its function is as follows. Inhibits platelet aggregation induced by thrombin, collagen and PAF-acether. Human platelet aggregation induced by thrombin is inhibited by synthetic lebetin-1-gamma with (IC(50)=5 nM). In vivo, inhibits collagen-induced thrombocytopenia in rats. Is not toxic upon intravenous injection into mice and rats. In terms of biological role, inhibits platelet aggregation induced by thrombin, collagen and PAF-acether. Human platelet aggregation induced by thrombin is inhibited by synthetic lebetin-1-alpha with (IC(50)=2.5 nM). In vivo, inhibits collagen-induced thrombocytopenia in rats. Is not toxic upon intravenous injection into mice and rats. Functionally, inhibits platelet aggregation induced by thrombin, collagen and PAF-acether. Human platelet aggregation induced by thrombin is inhibited by synthetic lebetin-1-alpha with (IC(50)=2.8 nM). In vivo, inhibits collagen-induced thrombocytopenia in rats. Is not toxic upon intravenous injection into mice and rats. The chain is Lebetin-2-alpha from Macrovipera lebetinus (Levantine viper).